Reading from the N-terminus, the 188-residue chain is Elongation factor P (188 aa).

Belongs to the elongation factor P family.

It localises to the cytoplasm. The protein operates within protein biosynthesis; polypeptide chain elongation. Its function is as follows. Involved in peptide bond synthesis. Stimulates efficient translation and peptide-bond synthesis on native or reconstituted 70S ribosomes in vitro. Probably functions indirectly by altering the affinity of the ribosome for aminoacyl-tRNA, thus increasing their reactivity as acceptors for peptidyl transferase. This chain is Elongation factor P, found in Cellvibrio japonicus (strain Ueda107) (Pseudomonas fluorescens subsp. cellulosa).